A 301-amino-acid polypeptide reads, in one-letter code: MTLDRDAASHVAEVLSEALPYIRRFVGKTLVIKYGGNAMESEELKTGFARDIVLMKAVGINPVVVHGGGPQIGDLLKRLSIESHFIDGMRVTDSATMDVVEMVLGGQVNKDIVNLINRHGGSAIGLTGKDAELIRARKLTVSRQTPEMTTPEIIDIGHVGEVVSVNTDLLNMLVKGDFIPVIAPIGVGANGESYNINADLVAGKVAEALKAEKLMLLTNIAGLMDKQGQVLTGLTTEQVNELIADGTIYGGMLPKIRCALDAVQGGVNSSHIIDGRVPNAVLLEIFTDSGVGTLITNRKPR.

Substrate-binding positions include 68–69 (GG), R90, and N195.

The protein belongs to the acetylglutamate kinase family. ArgB subfamily.

The protein resides in the cytoplasm. It catalyses the reaction N-acetyl-L-glutamate + ATP = N-acetyl-L-glutamyl 5-phosphate + ADP. It functions in the pathway amino-acid biosynthesis; L-arginine biosynthesis; N(2)-acetyl-L-ornithine from L-glutamate: step 2/4. Catalyzes the ATP-dependent phosphorylation of N-acetyl-L-glutamate. This Pseudomonas putida (strain GB-1) protein is Acetylglutamate kinase.